The chain runs to 160 residues: Non-secretory ribonuclease (160 aa).

Residues 1-27 (MVPKLFTSPICLLLLLGLMGVEGSLHA) form the signal peptide. A glycan (C-linked (Man) tryptophan) is linked at tryptophan 34. Histidine 42 functions as the Proton acceptor in the catalytic mechanism. Asparagine 44 carries N-linked (GlcNAc...) asparagine glycosylation. Cystine bridges form between cysteine 50–cysteine 110, cysteine 64–cysteine 122, cysteine 82–cysteine 137, and cysteine 89–cysteine 98. Tyrosine 60 is subject to 3'-nitrotyrosine. 65–69 (KNQNT) provides a ligand contact to substrate. 3 N-linked (GlcNAc...) asparagine glycosylation sites follow: asparagine 92, asparagine 111, and asparagine 138. The active-site Proton donor is the histidine 155.

The protein belongs to the pancreatic ribonuclease family. Interacts with and forms a tight 1:1 complex with RNH1. Dimerization of two such complexes may occur.

The protein localises to the lysosome. Its subcellular location is the cytoplasmic granule. It catalyses the reaction an [RNA] containing cytidine + H2O = an [RNA]-3'-cytidine-3'-phosphate + a 5'-hydroxy-ribonucleotide-3'-[RNA].. The enzyme catalyses an [RNA] containing uridine + H2O = an [RNA]-3'-uridine-3'-phosphate + a 5'-hydroxy-ribonucleotide-3'-[RNA].. This is a non-secretory ribonuclease. It is a pyrimidine specific nuclease with a slight preference for U. Cytotoxin and helminthotoxin. Possesses a wide variety of biological activities. The chain is Non-secretory ribonuclease (RNASE2) from Papio hamadryas (Hamadryas baboon).